Reading from the N-terminus, the 259-residue chain is Aspartate/glutamate leucyltransferase (259 aa).

It belongs to the R-transferase family. Bpt subfamily.

The protein resides in the cytoplasm. The enzyme catalyses N-terminal L-glutamyl-[protein] + L-leucyl-tRNA(Leu) = N-terminal L-leucyl-L-glutamyl-[protein] + tRNA(Leu) + H(+). The catalysed reaction is N-terminal L-aspartyl-[protein] + L-leucyl-tRNA(Leu) = N-terminal L-leucyl-L-aspartyl-[protein] + tRNA(Leu) + H(+). In terms of biological role, functions in the N-end rule pathway of protein degradation where it conjugates Leu from its aminoacyl-tRNA to the N-termini of proteins containing an N-terminal aspartate or glutamate. The polypeptide is Aspartate/glutamate leucyltransferase (Rhizobium meliloti (strain 1021) (Ensifer meliloti)).